A 601-amino-acid chain; its full sequence is Glutamine--fructose-6-phosphate aminotransferase [isomerizing] (601 aa).

C2 (nucleophile; for GATase activity) is an active-site residue. The Glutamine amidotransferase type-2 domain maps to 2-216 (CGIVGYIGTN…DKEIVIVTKD (215 aa)). 2 SIS domains span residues 282 to 421 (ILDE…EIGD) and 453 to 591 (IAGE…VDKP). Residue K596 is the For Fru-6P isomerization activity of the active site.

In terms of assembly, homodimer.

The protein localises to the cytoplasm. It catalyses the reaction D-fructose 6-phosphate + L-glutamine = D-glucosamine 6-phosphate + L-glutamate. Catalyzes the first step in hexosamine metabolism, converting fructose-6P into glucosamine-6P using glutamine as a nitrogen source. The polypeptide is Glutamine--fructose-6-phosphate aminotransferase [isomerizing] (Listeria innocua serovar 6a (strain ATCC BAA-680 / CLIP 11262)).